Here is a 362-residue protein sequence, read N- to C-terminus: UDP-N-acetylglucosamine--N-acetylmuramyl-(pentapeptide) pyrophosphoryl-undecaprenol N-acetylglucosamine transferase (362 aa).

Residues 14–16 (TGG), R170, S199, and Q289 contribute to the UDP-N-acetyl-alpha-D-glucosamine site.

Belongs to the glycosyltransferase 28 family. MurG subfamily.

Its subcellular location is the cell inner membrane. It carries out the reaction di-trans,octa-cis-undecaprenyl diphospho-N-acetyl-alpha-D-muramoyl-L-alanyl-D-glutamyl-meso-2,6-diaminopimeloyl-D-alanyl-D-alanine + UDP-N-acetyl-alpha-D-glucosamine = di-trans,octa-cis-undecaprenyl diphospho-[N-acetyl-alpha-D-glucosaminyl-(1-&gt;4)]-N-acetyl-alpha-D-muramoyl-L-alanyl-D-glutamyl-meso-2,6-diaminopimeloyl-D-alanyl-D-alanine + UDP + H(+). It functions in the pathway cell wall biogenesis; peptidoglycan biosynthesis. Functionally, cell wall formation. Catalyzes the transfer of a GlcNAc subunit on undecaprenyl-pyrophosphoryl-MurNAc-pentapeptide (lipid intermediate I) to form undecaprenyl-pyrophosphoryl-MurNAc-(pentapeptide)GlcNAc (lipid intermediate II). In Borrelia hermsii (strain HS1 / DAH), this protein is UDP-N-acetylglucosamine--N-acetylmuramyl-(pentapeptide) pyrophosphoryl-undecaprenol N-acetylglucosamine transferase.